Here is a 309-residue protein sequence, read N- to C-terminus: Ribose-phosphate pyrophosphokinase (309 aa).

ATP is bound by residues 37–39 (DGE) and 96–97 (RQ). Residues His130 and Asp169 each contribute to the Mg(2+) site. Lys192 is an active-site residue. Residues Arg194, Asp218, and 222–226 (DTAGT) each bind D-ribose 5-phosphate.

The protein belongs to the ribose-phosphate pyrophosphokinase family. Class I subfamily. Homohexamer. It depends on Mg(2+) as a cofactor.

Its subcellular location is the cytoplasm. The catalysed reaction is D-ribose 5-phosphate + ATP = 5-phospho-alpha-D-ribose 1-diphosphate + AMP + H(+). Its pathway is metabolic intermediate biosynthesis; 5-phospho-alpha-D-ribose 1-diphosphate biosynthesis; 5-phospho-alpha-D-ribose 1-diphosphate from D-ribose 5-phosphate (route I): step 1/1. Functionally, involved in the biosynthesis of the central metabolite phospho-alpha-D-ribosyl-1-pyrophosphate (PRPP) via the transfer of pyrophosphoryl group from ATP to 1-hydroxyl of ribose-5-phosphate (Rib-5-P). This is Ribose-phosphate pyrophosphokinase from Campylobacter jejuni subsp. jejuni serotype O:2 (strain ATCC 700819 / NCTC 11168).